Here is a 266-residue protein sequence, read N- to C-terminus: MSSPVKKMKKKTTTSPILSPTPHSTQILSLPVDLLISILARVSRLDYPILSLVSKSFRSLIASPELYETRSLLGRTESCLYLCLGIPSDFNPRWFTLCRKPKPSGHVMAAISIPNSRPVHCSGLVAVGSDIYNIGGSIINEHSSSVSILDCRYHTWRDAPNMLVERNSHAANVIDGKIYVAGGSRDSNSSNWMEVFDIKTQTWEPVLNPIADGCDRRIRKSAVIEEAICLFGYKGVGVAYNPRIDKWEAIGEVNYLDLGWVWLLVA.

In terms of domain architecture, F-box spans 24-70 (STQILSLPVDLLISILARVSRLDYPILSLVSKSFRSLIASPELYETR). Kelch repeat units follow at residues 130–176 (DIYN…VIDG), 178–223 (IYVA…KSAV), and 226–266 (EAIC…LLVA).

This chain is F-box/kelch-repeat protein At4g39560, found in Arabidopsis thaliana (Mouse-ear cress).